The primary structure comprises 32 residues: Photosystem II reaction center protein Z (32 aa).

A helical membrane pass occupies residues 12-32 (FGAAAWIGLVLLVGTLYYFVV).

This sequence belongs to the PsbZ family. In terms of assembly, PSII is composed of 1 copy each of membrane proteins PsbA, PsbB, PsbC, PsbD, PsbE, PsbF, PsbH, PsbI, PsbJ, PsbK, PsbL, PsbM, PsbT, PsbY, PsbZ, Psb30/Ycf12, at least 3 peripheral proteins of the oxygen-evolving complex and a large number of cofactors. It forms dimeric complexes.

The protein localises to the plastid. It localises to the chloroplast thylakoid membrane. Its function is as follows. May control the interaction of photosystem II (PSII) cores with the light-harvesting antenna, regulates electron flow through the 2 photosystem reaction centers. PSII is a light-driven water plastoquinone oxidoreductase, using light energy to abstract electrons from H(2)O, generating a proton gradient subsequently used for ATP formation. The sequence is that of Photosystem II reaction center protein Z from Euglena granulata.